A 457-amino-acid chain; its full sequence is GTPase Era, mitochondrial (457 aa).

A mitochondrion-targeting transit peptide spans 1–18; the sequence is MAFRVSISTFGKSLRVRR. Positions 107–350 constitute an Era-type G domain; sequence KVLRVAIIGA…RYLVVGAKPG (244 aa). Positions 115 to 122 are G1; that stretch reads GAPNAGKS. Residue 115 to 122 coordinates GTP; the sequence is GAPNAGKS. The tract at residues 141 to 145 is G2; it reads HTTRA. A G3 region spans residues 162 to 165; that stretch reads DTPG. GTP contacts are provided by residues 162–166 and 231–234; these read DTPGL and NKVD. The interval 231 to 234 is G4; the sequence is NKVD. Positions 270 to 290 are enriched in basic and acidic residues; sequence AERRTDREARTSGSGDEEKPG. Residues 270–300 are disordered; sequence AERRTDREARTSGSGDEEKPGGDVADGEGSE. The tract at residues 328 to 330 is G5; sequence VSA. The 82-residue stretch at 376-457 folds into the KH type-2 domain; the sequence is LLEYLPKEVP…KLRLSVKVKN (82 aa).

This sequence belongs to the TRAFAC class TrmE-Era-EngA-EngB-Septin-like GTPase superfamily. Era GTPase family.

The protein localises to the mitochondrion matrix. Its subcellular location is the mitochondrion inner membrane. Probable GTPase that plays a role in the mitochondrial ribosomal small subunit assembly. Specifically binds the 12S mitochondrial rRNA (12S mt-rRNA) to a 33 nucleotide section delineating the 3' terminal stem-loop region. May act as a chaperone that protects the 12S mt-rRNA on the 28S mitoribosomal subunit during ribosomal small subunit assembly. This chain is GTPase Era, mitochondrial (eral1), found in Salmo salar (Atlantic salmon).